The primary structure comprises 619 residues: Mitochondrial Rho GTPase 1 (619 aa).

Residues 1–593 (MKKDVRILLV…TQADLKSSTF (593 aa)) are Cytoplasmic-facing. The Miro 1 domain maps to 2–168 (KKDVRILLVG…FYYAQKAVLH (167 aa)). GTP contacts are provided by Arg-14, Gly-16, Lys-17, Thr-18, and Ser-19. Residue Thr-18 coordinates Mg(2+). 2 residues coordinate Mg(2+): Pro-35 and Asp-57. GTP contacts are provided by Ser-59, Asn-118, Lys-119, Asp-121, Ala-149, and Lys-150. 2 consecutive EF-hand domains span residues 184–219 (ACIKALTRIFRISDQDNDGTLNDAELNFFQRICFNT) and 304–339 (HAYLFLQSIFDKHDLDRDCALSPDELKDLFKVFPYM). Residues Asp-197, Asp-199, Asp-201, Thr-203, Glu-208, Asp-317, Asp-319, Asp-321, Ala-323, and Glu-328 each contribute to the Ca(2+) site. Residues 417-580 (RNVFRCNVVG…FVKLTTMAMY (164 aa)) enclose the Miro 2 domain. Residues Gly-429, Cys-430, Gly-431, Lys-432, Ser-433, Gly-434, Arg-448, Lys-529, Asp-531, Thr-559, and Cys-560 each coordinate GTP. Gly-429 serves as a coordination point for Mg(2+). Residues 594–616 (WLRASFGATVFAFLGFAMYKALI) traverse the membrane as a helical; Anchor for type IV membrane protein segment. Topologically, residues 617-619 (KQR) are mitochondrial intermembrane.

It belongs to the mitochondrial Rho GTPase family. Homodimer.

It is found in the mitochondrion outer membrane. The enzyme catalyses GTP + H2O = GDP + phosphate + H(+). The catalysed reaction is ATP + H2O = ADP + phosphate + H(+). It catalyses the reaction UTP + H2O = UDP + phosphate + H(+). Atypical mitochondrial nucleoside-triphosphatase (NTPase) involved in mitochondrial trafficking. Probably involved in control of anterograde transport of mitochondria and their subcellular distribution. Can hydrolyze GTP, ATP and UTP. The polypeptide is Mitochondrial Rho GTPase 1 (RHOT1) (Gallus gallus (Chicken)).